The sequence spans 690 residues: Lipase 2 (690 aa).

Residues 1-37 (MLRGQEERKYSIRKYSIGVVSVLAATMFVVSSHEAQA) form the signal peptide. The span at 52–71 (LNQPGEQGNAITSHQMQSGK) shows a compositional bias: polar residues. Positions 52-266 (LNQPGEQGNA…KPTDKNTDNK (215 aa)) are disordered. Basic and acidic residues predominate over residues 72–81 (QLDDMHKENG). Composition is skewed to polar residues over residues 82–114 (KSGT…NDNQ), 124–171 (SKQS…QPSI), and 185–206 (PTST…AQDA). Basic and acidic residues-rich tracts occupy residues 225–237 (IDAK…RQSE) and 257–266 (KPTDKNTDNK). Catalysis depends on charge relay system residues S412 and H645.

The protein belongs to the AB hydrolase superfamily. Lipase family.

The protein resides in the secreted. It catalyses the reaction a triacylglycerol + H2O = a diacylglycerol + a fatty acid + H(+). The polypeptide is Lipase 2 (lip2) (Staphylococcus aureus (strain NCTC 8325 / PS 47)).